The following is a 589-amino-acid chain: UvrABC system protein C (589 aa).

The region spanning 14–91 (HKPGCYLWKD…IAKYKPKYNM (78 aa)) is the GIY-YIG domain.

Belongs to the UvrC family. As to quaternary structure, interacts with UvrB in an incision complex.

It localises to the cytoplasm. The UvrABC repair system catalyzes the recognition and processing of DNA lesions. UvrC both incises the 5' and 3' sides of the lesion. The N-terminal half is responsible for the 3' incision and the C-terminal half is responsible for the 5' incision. The sequence is that of UvrABC system protein C from Malacoplasma penetrans (strain HF-2) (Mycoplasma penetrans).